We begin with the raw amino-acid sequence, 279 residues long: Elongation factor Ts (279 aa).

Residues 80 to 83 (TDFV) are involved in Mg(2+) ion dislocation from EF-Tu.

The protein belongs to the EF-Ts family.

It localises to the cytoplasm. Associates with the EF-Tu.GDP complex and induces the exchange of GDP to GTP. It remains bound to the aminoacyl-tRNA.EF-Tu.GTP complex up to the GTP hydrolysis stage on the ribosome. The chain is Elongation factor Ts (tsf) from Borreliella burgdorferi (strain ATCC 35210 / DSM 4680 / CIP 102532 / B31) (Borrelia burgdorferi).